Reading from the N-terminus, the 377-residue chain is Nitric oxide reductase FlRd-NAD(+) reductase (377 aa).

This sequence belongs to the FAD-dependent oxidoreductase family. FAD serves as cofactor.

It is found in the cytoplasm. The catalysed reaction is 2 reduced [nitric oxide reductase rubredoxin domain] + NAD(+) + H(+) = 2 oxidized [nitric oxide reductase rubredoxin domain] + NADH. Its pathway is nitrogen metabolism; nitric oxide reduction. Its function is as follows. One of at least two accessory proteins for anaerobic nitric oxide (NO) reductase. Reduces the rubredoxin moiety of NO reductase. The protein is Nitric oxide reductase FlRd-NAD(+) reductase of Escherichia coli O6:H1 (strain CFT073 / ATCC 700928 / UPEC).